Reading from the N-terminus, the 511-residue chain is 2'-acyl-2-O-sulfo-trehalose (hydroxy)phthioceranyltransferase PapA1 (511 aa).

This sequence belongs to the PapA acyltransferase family.

It catalyses the reaction a (hydroxy)phthioceranyl-[(hydroxy)phthioceranic acid synthase] + 2'-palmitoyl/stearoyl-2-O-sulfo-alpha,alpha-trehalose = a 3'-(hydroxy)phthioceranyl-2'-palmitoyl/stearoyl-2-O-sulfo-alpha,alpha-trehalose + holo-[(hydroxy)phthioceranic acid synthase].. Catalyzes the acylation of trehalose-2-sulfate-2'-palmitate (SL659) by adding the (hydroxy)phthioceranoyl group at the 3'-position to yield the diacylated intermediate 2-palmitoyl-3-(C43)-phthioceranyl-alpha, alpha'-D-trehalose-2'-sulfate (SL1278). In Mycobacterium bovis (strain BCG / Pasteur 1173P2), this protein is 2'-acyl-2-O-sulfo-trehalose (hydroxy)phthioceranyltransferase PapA1 (papA1).